Reading from the N-terminus, the 237-residue chain is Class B acid phosphatase (237 aa).

Positions 1-25 are cleaved as a signal peptide; it reads MRKLTLAFAAASLLFTLNSAVVARA. The active-site Nucleophile is the Asp69. Mg(2+)-binding residues include Asp69 and Asp71. Residue Asp71 is the Proton donor of the active site. Residues 137–138 and Lys177 each bind substrate; that span reads TG. Asp192 provides a ligand contact to Mg(2+).

This sequence belongs to the class B bacterial acid phosphatase family. In terms of assembly, homotetramer. Mg(2+) serves as cofactor.

The protein resides in the periplasm. The catalysed reaction is a phosphate monoester + H2O = an alcohol + phosphate. Functionally, dephosphorylates several organic phosphate monoesters. Also has a phosphotransferase activity catalyzing the transfer of low-energy phosphate groups from organic phosphate monoesters to free hydroxyl groups of various organic compounds. This chain is Class B acid phosphatase, found in Klebsiella pneumoniae (strain 342).